The primary structure comprises 257 residues: MKIDVNSDMGEGFGVWRVCDDDAMMRIVSSANIACGFHAGDPAIMTRMVRLAKAHGVGIGAHPGLPDKLGFGRKEMAFSADELCQLVVYQIGALCALAENEGMRVSHVSFHAAMGNMINRDDILALQVMQAIHRLDPEMIIFSQPDTIIERAAREAGLRSLTLFLADRAYDAQGHLVPRGTAGALISEETQVRDRVRQFLEQGTVKTIEGDMISVRAQSILVHSDTPGSVELAAIVRSEIEACGGTVTPAADVIAPS.

The protein belongs to the LamB/PxpA family. Forms a complex composed of PxpA, PxpB and PxpC.

It carries out the reaction 5-oxo-L-proline + ATP + 2 H2O = L-glutamate + ADP + phosphate + H(+). Catalyzes the cleavage of 5-oxoproline to form L-glutamate coupled to the hydrolysis of ATP to ADP and inorganic phosphate. The chain is 5-oxoprolinase subunit A from Pectobacterium atrosepticum (strain SCRI 1043 / ATCC BAA-672) (Erwinia carotovora subsp. atroseptica).